Reading from the N-terminus, the 542-residue chain is Phosphoacetylglucosamine mutase (542 aa).

M1 is subject to N-acetylmethionine. T62 is subject to Phosphothreonine. S64 (phosphoserine intermediate) is an active-site residue. Residues S64, D276, D278, and D280 each coordinate Mg(2+). A Phosphoserine modification is found at S64. Substrate is bound by residues 370-372 (EAN), 496-500 (RPSGT), and R505.

It belongs to the phosphohexose mutase family. It depends on Mg(2+) as a cofactor.

The catalysed reaction is N-acetyl-alpha-D-glucosamine 1-phosphate = N-acetyl-D-glucosamine 6-phosphate. Its pathway is nucleotide-sugar biosynthesis; UDP-N-acetyl-alpha-D-glucosamine biosynthesis; N-acetyl-alpha-D-glucosamine 1-phosphate from alpha-D-glucosamine 6-phosphate (route I): step 2/2. In terms of biological role, catalyzes the conversion of GlcNAc-6-P into GlcNAc-1-P during the synthesis of uridine diphosphate/UDP-GlcNAc, a sugar nucleotide critical to multiple glycosylation pathways including protein N- and O-glycosylation. The chain is Phosphoacetylglucosamine mutase from Mus musculus (Mouse).